Reading from the N-terminus, the 267-residue chain is 3-methyl-2-oxobutanoate hydroxymethyltransferase (267 aa).

Mg(2+) is bound by residues Asp42 and Asp86. Residues 42–43 (DS), Asp86, and Lys116 each bind 3-methyl-2-oxobutanoate. Residue Glu118 coordinates Mg(2+). Residue Glu185 is the Proton acceptor of the active site.

The protein belongs to the PanB family. In terms of assembly, homodecamer; pentamer of dimers. The cofactor is Mg(2+).

The protein resides in the cytoplasm. It carries out the reaction 3-methyl-2-oxobutanoate + (6R)-5,10-methylene-5,6,7,8-tetrahydrofolate + H2O = 2-dehydropantoate + (6S)-5,6,7,8-tetrahydrofolate. The protein operates within cofactor biosynthesis; (R)-pantothenate biosynthesis; (R)-pantoate from 3-methyl-2-oxobutanoate: step 1/2. Its function is as follows. Catalyzes the reversible reaction in which hydroxymethyl group from 5,10-methylenetetrahydrofolate is transferred onto alpha-ketoisovalerate to form ketopantoate. This chain is 3-methyl-2-oxobutanoate hydroxymethyltransferase, found in Parasynechococcus marenigrum (strain WH8102).